The sequence spans 243 residues: MYQWIQRDSDVHQRWIWCRRLLIVSLVSALMSVLQVIVFRFVDPPLSMTMVGRYLEAWSDRQWNFRLHYVWCDLEQIAPSVPISLVAAEDQRFPFHHGFDFDAIKNALGRHSRGGHLRGASTISQQVAKNLFLWSGRSFVRKGLEGWYTFWIELFWPKRRILEIYANIAEFGDGVYGVQAAARRYLGKGAADLDESDAAQLAAVLPSPRHYNIQHPGPYIRWRSSWIQRQAKQLGGSAYLDMH.

The chain crosses the membrane as a helical span at residues 21–43; sequence LLIVSLVSALMSVLQVIVFRFVD.

This sequence belongs to the glycosyltransferase 51 family.

The protein localises to the cell inner membrane. The catalysed reaction is [GlcNAc-(1-&gt;4)-Mur2Ac(oyl-L-Ala-gamma-D-Glu-L-Lys-D-Ala-D-Ala)](n)-di-trans,octa-cis-undecaprenyl diphosphate + beta-D-GlcNAc-(1-&gt;4)-Mur2Ac(oyl-L-Ala-gamma-D-Glu-L-Lys-D-Ala-D-Ala)-di-trans,octa-cis-undecaprenyl diphosphate = [GlcNAc-(1-&gt;4)-Mur2Ac(oyl-L-Ala-gamma-D-Glu-L-Lys-D-Ala-D-Ala)](n+1)-di-trans,octa-cis-undecaprenyl diphosphate + di-trans,octa-cis-undecaprenyl diphosphate + H(+). It functions in the pathway cell wall biogenesis; peptidoglycan biosynthesis. Peptidoglycan polymerase that catalyzes glycan chain elongation from lipid-linked precursors. This is Biosynthetic peptidoglycan transglycosylase from Xylella fastidiosa (strain M12).